A 231-amino-acid chain; its full sequence is Small ribosomal subunit protein uS3 (231 aa).

The KH type-2 domain occupies 39–107; it reads VREFLKEKLK…PAQINIAEVR (69 aa).

Belongs to the universal ribosomal protein uS3 family. As to quaternary structure, part of the 30S ribosomal subunit. Forms a tight complex with proteins S10 and S14.

Binds the lower part of the 30S subunit head. Binds mRNA in the 70S ribosome, positioning it for translation. In Colwellia psychrerythraea (strain 34H / ATCC BAA-681) (Vibrio psychroerythus), this protein is Small ribosomal subunit protein uS3.